A 264-amino-acid polypeptide reads, in one-letter code: Regulatory protein RecX (264 aa).

Belongs to the RecX family.

The protein resides in the cytoplasm. Negatively modulates RecA activity. The polypeptide is Regulatory protein RecX (Bacillus subtilis (strain 168)).